Reading from the N-terminus, the 140-residue chain is Putative pre-16S rRNA nuclease (140 aa).

It belongs to the YqgF nuclease family.

It is found in the cytoplasm. In terms of biological role, could be a nuclease involved in processing of the 5'-end of pre-16S rRNA. The sequence is that of Putative pre-16S rRNA nuclease from Serratia proteamaculans (strain 568).